The following is a 361-amino-acid chain: MNYIYSFINGDFMRFFNREKEITEILSILEGNPDLVYFVYGPLNSGKTALISEIINNRIDKNKYVVFYINLRGIFISKYKDFIEVLFEEYEEDRKPVEIIKSLIKDVPSLCGIPTPKNTLEEILKKKTTKNVFKYITNVLMDIKKEGKQPIIIIDELQKIGDMKINGFLIYELFNYFVDLTKELHLCHVFCLSSDSLFIEQVYSEAMLKDRVDYILVDDFDKETALKFMDFLAEEILNKKLSDDEKELIYSYVGGKPILIIKVIKKLKIKGLKETLDEMLRDEMQKLKYFLEDIKEKDEESYNKIADALEIFKDSYEIEDIKIPKNIREFLVKKNILFLNPQKGTLKPQSYLVWNAIKRLL.

An ATP-binding site is contributed by 41-48; the sequence is GPLNSGKT.

Belongs to the archaeal ATPase family.

This is an uncharacterized protein from Methanocaldococcus jannaschii (strain ATCC 43067 / DSM 2661 / JAL-1 / JCM 10045 / NBRC 100440) (Methanococcus jannaschii).